The following is a 645-amino-acid chain: Cytoplasmic dynein 1 intermediate chain 1 (645 aa).

2 stretches are compositionally biased toward basic and acidic residues: residues 1-13 (MSDK…ELER) and 20-58 (QIRE…KRRE). Disordered regions lie at residues 1 to 58 (MSDK…KRRE) and 96 to 125 (MSPS…RTLQ). Position 2 is an N-acetylserine (S2). An interaction with DCTN1 region spans residues 2–123 (SDKSDLKAEL…SGDLGPLTRT (122 aa)). A phosphoserine mark is found at S50 and S100. Positions 96 to 107 (MSPSSKSVSTPS) are enriched in low complexity. T105 bears the Phosphothreonine mark. Phosphoserine occurs at positions 107, 111, and 114. The interval 147–163 (KLGVSKVTQVDFLPREV) is interaction with DYNLT1. Positions 169–221 (ETQTPLATHQSEEDEEDEEMVESKVGQDSELENQDKKQEVKEAPPRELTEEEK) are disordered. T176 bears the Phosphothreonine mark. A phosphoserine mark is found at S179 and S197. Residues 189 to 221 (VESKVGQDSELENQDKKQEVKEAPPRELTEEEK) are compositionally biased toward basic and acidic residues. WD repeat units follow at residues 285–334 (SKHR…TTPE), 338–378 (HCQS…RTPV), 387–428 (AHTH…TPQE), 437–477 (SKPV…AGIG), 482–527 (GHQG…PLYS), 530–570 (DNAD…EVPT), and 576–615 (EGAS…VPHN). S635 is modified (phosphoserine).

This sequence belongs to the dynein intermediate chain family. In terms of assembly, homodimer. The cytoplasmic dynein 1 complex consists of two catalytic heavy chains (HCs) and a number of non-catalytic subunits presented by intermediate chains (ICs), light intermediate chains (LICs) and light chains (LCs); the composition seems to vary in respect to the IC, LIC and LC composition. The heavy chain homodimer serves as a scaffold for the probable homodimeric assembly of the respective non-catalytic subunits. The ICs and LICs bind directly to the HC dimer and the LCs assemble on the IC dimer. Interacts with DYNC1H1. Interacts with DYNLT1 and DYNLT3. Interacts with DCTN1. Interacts with MCRS1; the interaction is required for the proper distribution of centriolar satellites.

It is found in the cytoplasm. It localises to the chromosome. The protein localises to the centromere. The protein resides in the kinetochore. Its subcellular location is the cytoskeleton. It is found in the spindle pole. Functionally, acts as one of several non-catalytic accessory components of the cytoplasmic dynein 1 complex that are thought to be involved in linking dynein to cargos and to adapter proteins that regulate dynein function. Cytoplasmic dynein 1 acts as a motor for the intracellular retrograde motility of vesicles and organelles along microtubules. The intermediate chains mediate the binding of dynein to dynactin via its 150 kDa component (p150-glued) DCTN1. May play a role in mediating the interaction of cytoplasmic dynein with membranous organelles and kinetochores. This chain is Cytoplasmic dynein 1 intermediate chain 1 (DYNC1I1), found in Homo sapiens (Human).